We begin with the raw amino-acid sequence, 246 residues long: uncharacterized protein (246 aa).

A disordered region spans residues 120-149 (EKCAGETSPYTSASVSNSKKATSSSNFTKS). The segment covering 130–149 (TSASVSNSKKATSSSNFTKS) has biased composition (low complexity).

This is an uncharacterized protein from Caenorhabditis elegans.